We begin with the raw amino-acid sequence, 250 residues long: MRKTIIAGNWKMNLSLKEAVFLAHSIREKIPSISKDKVSMVFPSTLHLENVSKILEGSSVIVGAQNCYHSGLAAFTGETSPDQLKEIGVKVVMVGHSERRQFLGESNFFCNDKIRFLLKNEFTVLYCVGETLSERESGKTLEVLSSQIREGLKGIDSVFFSNLILAYEPVWAIGTGKVATPSQAQEVHSFIRKEISGLFVGASSISESISILYGGSVKPDNIQDLLKEKDIDGGLVGGASQKISSFAGLF.

9-11 (NWK) lines the substrate pocket. H96 (electrophile) is an active-site residue. E168 acts as the Proton acceptor in catalysis. Substrate is bound by residues G174, S216, and 237–238 (GG).

The protein belongs to the triosephosphate isomerase family. In terms of assembly, homodimer.

The protein localises to the cytoplasm. The catalysed reaction is D-glyceraldehyde 3-phosphate = dihydroxyacetone phosphate. It participates in carbohydrate biosynthesis; gluconeogenesis. Its pathway is carbohydrate degradation; glycolysis; D-glyceraldehyde 3-phosphate from glycerone phosphate: step 1/1. Its function is as follows. Involved in the gluconeogenesis. Catalyzes stereospecifically the conversion of dihydroxyacetone phosphate (DHAP) to D-glyceraldehyde-3-phosphate (G3P). The protein is Triosephosphate isomerase of Leptospira interrogans serogroup Icterohaemorrhagiae serovar copenhageni (strain Fiocruz L1-130).